We begin with the raw amino-acid sequence, 125 residues long: Methylglyoxal synthase (125 aa).

Residues 1 to 125 (MTERLRIALI…TAEKLIKALD (125 aa)) enclose the MGS-like domain. Substrate-binding positions include His-12, Lys-16, 38-41 (TGTT), and 59-60 (SG). Asp-65 functions as the Proton donor/acceptor in the catalytic mechanism. His-92 contributes to the substrate binding site.

This sequence belongs to the methylglyoxal synthase family.

It catalyses the reaction dihydroxyacetone phosphate = methylglyoxal + phosphate. In terms of biological role, catalyzes the formation of methylglyoxal from dihydroxyacetone phosphate. In Brucella anthropi (strain ATCC 49188 / DSM 6882 / CCUG 24695 / JCM 21032 / LMG 3331 / NBRC 15819 / NCTC 12168 / Alc 37) (Ochrobactrum anthropi), this protein is Methylglyoxal synthase.